The sequence spans 241 residues: Chaperone protein HifB (241 aa).

An N-terminal signal peptide occupies residues 1 to 27; the sequence is MGKTMFKKTLLFFTALFFTALCAFSAN.

This sequence belongs to the periplasmic pilus chaperone family.

The protein resides in the periplasm. Mediates assembly of pili by forming soluble multimeric complexes with pili subunits as an intermediate step in the assembly process. This protein is involved in type B pili (HifA) assembly. In Haemophilus influenzae, this protein is Chaperone protein HifB (hifB).